The following is a 480-amino-acid chain: Acetylxylan esterase (480 aa).

Residues 1–19 (MNRKLFMTGLLMLAMTMQA) form the signal peptide.

Belongs to the AB hydrolase superfamily.

It carries out the reaction Deacetylation of xylans and xylo-oligosaccharides.. The protein operates within glycan degradation; xylan degradation. Involved in degradation of plant cell wall polysaccharides. Is an acetyl esterase with broad substrate specificity, releasing acetic acid from acetylated xylo-oligosaccharides and acetylated xylan as well as xylose-tetraacetate, 4-O-methylumbelliferyl acetate, glucose-pentaacetate, and cephalosporin C. Appears to have greater activity on oligosaccharides than on polymeric substrates. Is also able to release acetic acid from xylo-oligosaccharides with 4-O-methylglucuronic acid side groups proximally located to O-acetyl esters. Preferentially targets xylo-oligosaccharides possessing three or more O-acetyl groups, but following their depletion it is active on the less acetylated portion of the substrate. The protein is Acetylxylan esterase of Xylanibacter ruminicola (strain ATCC 19189 / DSM 19721 / CIP 105475 / JCM 8958 / 23) (Prevotella ruminicola).